We begin with the raw amino-acid sequence, 640 residues long: Threonine--tRNA ligase (640 aa).

The TGS domain maps to 1–59 (MKIKVKLPDGKEKEYDRGITPAEIAKELGVKKAIGAVVNGELWDLKRPIENDCELRLVT). Residues 240-531 (DHRKLGPHLE…LIEHFAGAFP (292 aa)) are catalytic. Residues Cys332, His383, and His508 each coordinate Zn(2+).

It belongs to the class-II aminoacyl-tRNA synthetase family. As to quaternary structure, homodimer. Zn(2+) is required as a cofactor.

It localises to the cytoplasm. It carries out the reaction tRNA(Thr) + L-threonine + ATP = L-threonyl-tRNA(Thr) + AMP + diphosphate + H(+). Catalyzes the attachment of threonine to tRNA(Thr) in a two-step reaction: L-threonine is first activated by ATP to form Thr-AMP and then transferred to the acceptor end of tRNA(Thr). Also edits incorrectly charged L-seryl-tRNA(Thr). The chain is Threonine--tRNA ligase from Thermotoga petrophila (strain ATCC BAA-488 / DSM 13995 / JCM 10881 / RKU-1).